A 302-amino-acid chain; its full sequence is 4-hydroxy-tetrahydrodipicolinate synthase (302 aa).

Residue T55 coordinates pyruvate. Y144 (proton donor/acceptor) is an active-site residue. Residue K172 is the Schiff-base intermediate with substrate of the active site. Residue V214 participates in pyruvate binding.

Belongs to the DapA family. Homotetramer; dimer of dimers.

It localises to the cytoplasm. The enzyme catalyses L-aspartate 4-semialdehyde + pyruvate = (2S,4S)-4-hydroxy-2,3,4,5-tetrahydrodipicolinate + H2O + H(+). The protein operates within amino-acid biosynthesis; L-lysine biosynthesis via DAP pathway; (S)-tetrahydrodipicolinate from L-aspartate: step 3/4. Catalyzes the condensation of (S)-aspartate-beta-semialdehyde [(S)-ASA] and pyruvate to 4-hydroxy-tetrahydrodipicolinate (HTPA). The chain is 4-hydroxy-tetrahydrodipicolinate synthase from Prochlorococcus marinus (strain NATL2A).